An 84-amino-acid polypeptide reads, in one-letter code: uncharacterized protein (84 aa).

This sequence belongs to the csb family.

This is an uncharacterized protein from Dictyostelium discoideum (Social amoeba).